Here is a 164-residue protein sequence, read N- to C-terminus: UPF0251 protein MM_1448 (164 aa).

Over residues 91–100 (GDYRMPRGDR) the composition is skewed to basic and acidic residues. Residues 91-123 (GDYRMPRGDRTGPAGQGPAGGGRGRGQGKGRGG) are disordered. Residues 104–115 (AGQGPAGGGRGR) are compositionally biased toward gly residues.

It belongs to the UPF0251 family.

The protein is UPF0251 protein MM_1448 of Methanosarcina mazei (strain ATCC BAA-159 / DSM 3647 / Goe1 / Go1 / JCM 11833 / OCM 88) (Methanosarcina frisia).